The sequence spans 403 residues: Acetate kinase (403 aa).

A Mg(2+)-binding site is contributed by Asn7. An ATP-binding site is contributed by Lys14. Arg90 provides a ligand contact to substrate. The active-site Proton donor/acceptor is Asp147. ATP contacts are provided by residues 207 to 211 (HIGNG), 283 to 285 (DMR), and 331 to 335 (GVGEN). Residue Glu386 participates in Mg(2+) binding.

The protein belongs to the acetokinase family. In terms of assembly, homodimer. Mg(2+) serves as cofactor. Mn(2+) is required as a cofactor.

It localises to the cytoplasm. The catalysed reaction is acetate + ATP = acetyl phosphate + ADP. It functions in the pathway metabolic intermediate biosynthesis; acetyl-CoA biosynthesis; acetyl-CoA from acetate: step 1/2. Functionally, catalyzes the formation of acetyl phosphate from acetate and ATP. Can also catalyze the reverse reaction. The sequence is that of Acetate kinase from Thermotoga sp. (strain RQ2).